A 427-amino-acid chain; its full sequence is Phosphoglucosamine mutase (427 aa).

Ser94 (phosphoserine intermediate) is an active-site residue. Residues Ser94, Asp228, Asp230, and Asp232 each contribute to the Mg(2+) site. Phosphoserine is present on Ser94.

Belongs to the phosphohexose mutase family. Requires Mg(2+) as cofactor. Post-translationally, activated by phosphorylation.

The catalysed reaction is alpha-D-glucosamine 1-phosphate = D-glucosamine 6-phosphate. Functionally, catalyzes the conversion of glucosamine-6-phosphate to glucosamine-1-phosphate. The chain is Phosphoglucosamine mutase from Thermotoga sp. (strain RQ2).